Here is a 234-residue protein sequence, read N- to C-terminus: Small ribosomal subunit protein uS3 (234 aa).

In terms of domain architecture, KH type-2 spans Ile39–Arg107. Basic and acidic residues predominate over residues Gln215–Ala227. A disordered region spans residues Gln215–Ala234.

Belongs to the universal ribosomal protein uS3 family. In terms of assembly, part of the 30S ribosomal subunit. Forms a tight complex with proteins S10 and S14.

Functionally, binds the lower part of the 30S subunit head. Binds mRNA in the 70S ribosome, positioning it for translation. This Maricaulis maris (strain MCS10) (Caulobacter maris) protein is Small ribosomal subunit protein uS3.